Consider the following 113-residue polypeptide: Defense protein 2 (113 aa).

Belongs to the attacin/sarcotoxin-2 family.

It is found in the secreted. Has antibacterial activity against both Gram-positive and Gram-negative bacteria. This Lonomia obliqua (Moth) protein is Defense protein 2.